The following is a 173-amino-acid chain: uncharacterized protein (173 aa).

Residues 2 to 171 (VTVREAKLED…PDLSALKTLL (170 aa)) form the N-acetyltransferase domain.

It belongs to the acetyltransferase family.

This is an uncharacterized protein from Bacillus subtilis (strain 168).